The primary structure comprises 335 residues: MSVSNTVTKVEEFDFEDEALEVLETDAELTSDEELVAVEGASEDVREEFDASAKSLDATQMYLSEIGFSPLLTAEEEVLYARRALRGDEAARKRMIESNLRLVVKISRRYSNRGLALLDLIEEGNLGLIRAVEKFDPERGFRFSTYATWWIRQTIERALMNQTRTIRLPIHVVKELNIYLRTARELSQRLDHEPTPEEIALELDRPVDDVTKMLRLNERISSVDTPIGGDGDKALLDILPDSHNADPEFSTQDDDIRESLLNWLDELNPKQKEVLARRFGLLGYEPSTLEEVGREINLTRERVRQIQVEGLRRLREILVKQGLNMEALFNVEYDN.

Residues 57–90 form a sigma-70 factor domain-1 region; the sequence is DATQMYLSEIGFSPLLTAEEEVLYARRALRGDEA. The segment at 95–165 is sigma-70 factor domain-2; the sequence is MIESNLRLVV…ERALMNQTRT (71 aa). Residues 119–122 carry the Interaction with polymerase core subunit RpoC motif; it reads DLIE. The segment at 175-250 is sigma-70 factor domain-3; sequence ELNIYLRTAR…DSHNADPEFS (76 aa). The segment at 263 to 316 is sigma-70 factor domain-4; it reads WLDELNPKQKEVLARRFGLLGYEPSTLEEVGREINLTRERVRQIQVEGLRRLRE. A DNA-binding region (H-T-H motif) is located at residues 289 to 308; that stretch reads LEEVGREINLTRERVRQIQV.

The protein belongs to the sigma-70 factor family. RpoS subfamily. Interacts with the RNA polymerase core enzyme.

It localises to the cytoplasm. Its function is as follows. Sigma factors are initiation factors that promote the attachment of RNA polymerase to specific initiation sites and are then released. This sigma factor is the master transcriptional regulator of the stationary phase and the general stress response. May be required for the persistence of V.cholerae in aquatic habitats. This chain is RNA polymerase sigma factor RpoS, found in Vibrio cholerae serotype O1 (strain ATCC 39315 / El Tor Inaba N16961).